Reading from the N-terminus, the 525-residue chain is MRRRRRRDGFYPAPDFRDREAEDMAGVFDIDLDQPEDAGSEDELEEGGQLNESMDHGGVGPYELGMEHCEKFEISETSVNRGPEKIRPECFELLRVLGKGGYGKVFQVRKVTGANTGKIFAMKVLKKAMIVRNAKDTAHTKAERNILEEVKHPFIVDLIYAFQTGGKLYLILEYLSGGELFMQLEREGIFMEDTACFYLAEISMALGHLHQKGIIYRDLKPENIMLNHQGHVKLTDFGLCKESIHDGTVTHTFCGTIEYMAPEILMRSGHNRAVDWWSLGALMYDMLTGAPPFTGENRKKTIDKILKCKLNLPPYLTQEARDLLKKLLKRNAASRLGAGPGDAGEVQAHPFFRHINWEELLARKVEPPFKPLLQSEEDVSQFDSKFTRQTPVDSPDDSTLSESANQVFLGFTYVAPSVLESVKEKFSFEPKIRSPRRFIGSPRTPVSPVKFSPGDFWGRGASASTANPQTPVEYPMETSGIEQMDVTMSGEASAPLPIRQPNSGPYKKQAFPMISKRPEHLRMNL.

The disordered stretch occupies residues 1–54 (MRRRRRRDGFYPAPDFRDREAEDMAGVFDIDLDQPEDAGSEDELEEGGQLNESM). Residues 28-32 (FDIDL) carry the TOS motif motif. The span at 30–46 (IDLDQPEDAGSEDELEE) shows a compositional bias: acidic residues. The Protein kinase domain maps to 91-352 (FELLRVLGKG…AGEVQAHPFF (262 aa)). Residues 97 to 105 (LGKGGYGKV) and Lys-123 contribute to the ATP site. The active-site Proton acceptor is the Asp-218. Thr-252 is modified (phosphothreonine; by PDPK1). In terms of domain architecture, AGC-kinase C-terminal spans 353–423 (RHINWEELLA…VAPSVLESVK (71 aa)). Positions 380–399 (SQFDSKFTRQTPVDSPDDST) are disordered. A compositionally biased stretch (polar residues) spans 381–399 (QFDSKFTRQTPVDSPDDST). Ser-394 carries the post-translational modification Phosphoserine. Phosphothreonine; by MTOR, NEK6 and NEK7 is present on Thr-412. The interval 424–525 (EKFSFEPKIR…KRPEHLRMNL (102 aa)) is autoinhibitory domain. Phosphoserine occurs at positions 434 and 441. A Phosphothreonine modification is found at Thr-444. Phosphoserine is present on residues Ser-447 and Ser-452. Lys-516 is subject to N6-acetyllysine.

This sequence belongs to the protein kinase superfamily. AGC Ser/Thr protein kinase family. S6 kinase subfamily. In terms of assembly, interacts with PPP1R9A/neurabin-1. Interacts with RPTOR. Interacts with IRS1. Interacts with EIF3B and EIF3C. Interacts with TRAF4. Interacts with POLDIP3. Interacts (via N-terminus) with IER5. (Microbial infection) Interacts with Mumps virus phosphoprotein; this interaction may play a role in the viral replication and transcription. In terms of processing, phosphorylation at Thr-412 is regulated by mTORC1. The phosphorylation at this site is maintained by an agonist-dependent autophosphorylation mechanism. Activated by phosphorylation at Thr-252 by PDPK1. Dephosphorylation by PPP1CC at Thr-412 in mitochondrion. As to expression, widely expressed.

The protein localises to the synapse. The protein resides in the synaptosome. It is found in the mitochondrion outer membrane. It localises to the mitochondrion. Its subcellular location is the nucleus. The protein localises to the cytoplasm. The catalysed reaction is L-seryl-[protein] + ATP = O-phospho-L-seryl-[protein] + ADP + H(+). The enzyme catalyses L-threonyl-[protein] + ATP = O-phospho-L-threonyl-[protein] + ADP + H(+). Its activity is regulated as follows. Activation requires multiple phosphorylation events on serine/threonine residues. Activation appears to be first mediated by phosphorylation of multiple sites in the autoinhibitory domain, which facilitates phosphorylation at Thr-412, disrupting the autoinhibitory mechanism and allowing phosphorylation of Thr-252 by PDPK1. The active conformation of the kinase is believed to be stabilized by a mechanism involving three conserved phosphorylation sites located in the kinase domain activation loop (Thr-252) and in the AGC-kinase C-terminal domain (Ser-394 in the middle of the tail/linker region and Thr-412 within a hydrophobic motif at its end). Activated by mTORC1; isoform Alpha I and isoform Alpha II are sensitive to rapamycin, which inhibits activating phosphorylation at Thr-412. Activated by PDPK1. Functionally, serine/threonine-protein kinase that acts downstream of mTOR signaling in response to growth factors and nutrients to promote cell proliferation, cell growth and cell cycle progression. Regulates protein synthesis through phosphorylation of EIF4B, RPS6 and EEF2K, and contributes to cell survival by repressing the pro-apoptotic function of BAD. Under conditions of nutrient depletion, the inactive form associates with the EIF3 translation initiation complex. Upon mitogenic stimulation, phosphorylation by the mechanistic target of rapamycin complex 1 (mTORC1) leads to dissociation from the EIF3 complex and activation. The active form then phosphorylates and activates several substrates in the pre-initiation complex, including the EIF2B complex and the cap-binding complex component EIF4B. Also controls translation initiation by phosphorylating a negative regulator of EIF4A, PDCD4, targeting it for ubiquitination and subsequent proteolysis. Promotes initiation of the pioneer round of protein synthesis by phosphorylating POLDIP3/SKAR. In response to IGF1, activates translation elongation by phosphorylating EEF2 kinase (EEF2K), which leads to its inhibition and thus activation of EEF2. Also plays a role in feedback regulation of mTORC2 by mTORC1 by phosphorylating MAPKAP1/SIN1, MTOR and RICTOR, resulting in the inhibition of mTORC2 and AKT1 signaling. Also involved in feedback regulation of mTORC1 and mTORC2 by phosphorylating DEPTOR. Mediates cell survival by phosphorylating the pro-apoptotic protein BAD and suppressing its pro-apoptotic function. Phosphorylates mitochondrial URI1 leading to dissociation of a URI1-PPP1CC complex. The free mitochondrial PPP1CC can then dephosphorylate RPS6KB1 at Thr-412, which is proposed to be a negative feedback mechanism for the RPS6KB1 anti-apoptotic function. Mediates TNF-alpha-induced insulin resistance by phosphorylating IRS1 at multiple serine residues, resulting in accelerated degradation of IRS1. In cells lacking functional TSC1-2 complex, constitutively phosphorylates and inhibits GSK3B. May be involved in cytoskeletal rearrangement through binding to neurabin. Phosphorylates and activates the pyrimidine biosynthesis enzyme CAD, downstream of MTOR. Following activation by mTORC1, phosphorylates EPRS and thereby plays a key role in fatty acid uptake by adipocytes and also most probably in interferon-gamma-induced translation inhibition. This chain is Ribosomal protein S6 kinase beta-1 (RPS6KB1), found in Homo sapiens (Human).